Here is a 376-residue protein sequence, read N- to C-terminus: Lateral eye opsin (376 aa).

Residues 1–46 (MANQLSYSSLGWPYQPNASVVDTMPKEMLYMIHEHWYAFPPMNPLW) are Extracellular-facing. Asn-17 carries an N-linked (GlcNAc...) asparagine glycan. The chain crosses the membrane as a helical span at residues 47–71 (YSILGVAMIILGIICVLGNGMVIYL). At 72–83 (MMTTKSLRTPTN) the chain is on the cytoplasmic side. Residues 84–108 (LLVVNLAFSDFCMMAFMMPTMTSNC) traverse the membrane as a helical segment. Topologically, residues 109 to 123 (FAETWILGPFMCEVY) are extracellular. An intrachain disulfide couples Cys-120 to Cys-197. Residues 124-143 (GMAGSLFGCASIWSMVMITL) traverse the membrane as a helical segment. The Cytoplasmic portion of the chain corresponds to 144-162 (DRYNVIVRGMAAAPLTHKK). The chain crosses the membrane as a helical span at residues 163–186 (ATLLLLFVWIWSGGWTILPFFGWS). At 187-210 (RYVPEGNLTSCTVDYLTKDWSSAS) the chain is on the extracellular side. N-linked (GlcNAc...) asparagine glycosylation occurs at Asn-193. A helical membrane pass occupies residues 211–238 (YVVIYGLAVYFLPLITMIYCYFFIVHAV). Over 239 to 274 (AEHEKQLREQAKKMNVASLRANADQQKQSAECRLAK) the chain is Cytoplasmic. The helical transmembrane segment at 275–298 (VAMMTVGLWFMAWTPYLIISWAGV) threads the bilayer. Residues 299–306 (FSSGTRLT) are Extracellular-facing. The helical transmembrane segment at 307–331 (PLATIWGSVFAKANSCYNPIVYGIS) threads the bilayer. Lys-318 carries the post-translational modification N6-(retinylidene)lysine. Topologically, residues 332–376 (HPRYKAALYQRFPSLACGSGESGSDVKSEASATTTMEEKPKIPEA) are cytoplasmic. The segment at 349–376 (GSGESGSDVKSEASATTTMEEKPKIPEA) is disordered. Residues 367 to 376 (MEEKPKIPEA) are compositionally biased toward basic and acidic residues.

This sequence belongs to the G-protein coupled receptor 1 family. Opsin subfamily. Phosphorylated on some or all of the serine and threonine residues present in the C-terminal region. As to expression, lateral eye.

The protein localises to the membrane. In terms of biological role, visual pigments are the light-absorbing molecules that mediate vision. They consist of an apoprotein, opsin, covalently linked to cis-retinal. The polypeptide is Lateral eye opsin (Limulus polyphemus (Atlantic horseshoe crab)).